The primary structure comprises 293 residues: Formamidopyrimidine-DNA glycosylase (293 aa).

The Schiff-base intermediate with DNA role is filled by proline 2. Catalysis depends on glutamate 3, which acts as the Proton donor. Lysine 58 serves as the catalytic Proton donor; for beta-elimination activity. Residues histidine 104, arginine 127, and arginine 170 each coordinate DNA. Residues 257 to 293 form an FPG-type zinc finger; that stretch reads SVYGREGKPCRNPACGGTVERVVQSGRSTFFCASCQT. Arginine 283 (proton donor; for delta-elimination activity) is an active-site residue.

It belongs to the FPG family. Monomer. Zn(2+) is required as a cofactor.

It carries out the reaction Hydrolysis of DNA containing ring-opened 7-methylguanine residues, releasing 2,6-diamino-4-hydroxy-5-(N-methyl)formamidopyrimidine.. The enzyme catalyses 2'-deoxyribonucleotide-(2'-deoxyribose 5'-phosphate)-2'-deoxyribonucleotide-DNA = a 3'-end 2'-deoxyribonucleotide-(2,3-dehydro-2,3-deoxyribose 5'-phosphate)-DNA + a 5'-end 5'-phospho-2'-deoxyribonucleoside-DNA + H(+). In terms of biological role, involved in base excision repair of DNA damaged by oxidation or by mutagenic agents. Acts as a DNA glycosylase that recognizes and removes damaged bases. Has a preference for oxidized purines, such as 7,8-dihydro-8-oxoguanine (8-oxoG). Has AP (apurinic/apyrimidinic) lyase activity and introduces nicks in the DNA strand. Cleaves the DNA backbone by beta-delta elimination to generate a single-strand break at the site of the removed base with both 3'- and 5'-phosphates. The sequence is that of Formamidopyrimidine-DNA glycosylase from Brucella melitensis biotype 1 (strain ATCC 23456 / CCUG 17765 / NCTC 10094 / 16M).